Consider the following 270-residue polypeptide: Regulatory protein RecX (270 aa).

The protein belongs to the RecX family.

The protein resides in the cytoplasm. In terms of biological role, modulates RecA activity. This is Regulatory protein RecX from Bacillus cereus (strain 03BB102).